The following is a 92-amino-acid chain: Small ribosomal subunit protein uS19 (92 aa).

Belongs to the universal ribosomal protein uS19 family.

Protein S19 forms a complex with S13 that binds strongly to the 16S ribosomal RNA. The chain is Small ribosomal subunit protein uS19 from Roseobacter denitrificans (strain ATCC 33942 / OCh 114) (Erythrobacter sp. (strain OCh 114)).